A 236-amino-acid polypeptide reads, in one-letter code: Rab-like protein 3 (236 aa).

Residues 1–236 (MASLDRVKVL…AGTLKSLHYD (236 aa)) are small GTPase-like. Residues 16 to 21 (GVGKSS), 148 to 150 (KLD), and 179 to 180 (DC) each bind GTP.

It belongs to the small GTPase superfamily. Rab family. In terms of assembly, homodimer. Interacts with GPR89; the interaction stabilizes GPR89. Interacts with RAP1GDS1.

Its function is as follows. Required for KRAS signaling regulation and modulation of cell proliferation. Regulator of KRAS prenylation, and probably prenylation of other small GTPases. Required for lymphocyte development and function. Not required for myeloid cell development. The protein is Rab-like protein 3 (RABL3) of Homo sapiens (Human).